Reading from the N-terminus, the 406-residue chain is Arginine decarboxylase (406 aa).

Residue K8 is modified to N6-(pyridoxal phosphate)lysine. Residue 192-202 (VDFGGGLGIDY) participates in substrate binding.

It belongs to the Orn/Lys/Arg decarboxylase class-II family. SpeA subfamily. Pyridoxal 5'-phosphate is required as a cofactor. Requires Mg(2+) as cofactor.

It carries out the reaction L-arginine + H(+) = agmatine + CO2. The protein operates within amine and polyamine biosynthesis; agmatine biosynthesis; agmatine from L-arginine: step 1/1. The protein is Arginine decarboxylase (SPE2) of Theobroma cacao (Cacao).